A 92-amino-acid chain; its full sequence is Auxin-responsive protein SAUR28 (92 aa).

Belongs to the ARG7 family. In terms of tissue distribution, higher expression in thermo-responsive cultivars (e.g. cv. Alst-1, cv. Ang-0 and cv. Com-0) than in low thermo-responsive cultivars (e.g. cv. Dja-1, cv. El-0 and cv. Kon).

The protein resides in the cell membrane. Its function is as follows. Functions as a positive effector of cell expansion through modulation of auxin transport. Involved in thermo-responsiveness of plant architecture. Enhances plasma membrane H(+)-ATPase. This is Auxin-responsive protein SAUR28 from Arabidopsis thaliana (Mouse-ear cress).